The primary structure comprises 1058 residues: MEANQAGSGAGGGGSSGIGGEDGVHFQSYPFDFLEFLNHQRFEPMELYGEHAKAVAALPCTPGPPPQPPPQPPPPQYDYPPQSSFKPKAEAPSSSSSSSSSSSSSSSSSSSSSQAKKMDPPLPPTFGAPPPPLFDAAFPAPQWGIVDLSGHQHLFGNLKRGGPTPGPGVASGLGTPTGTPGPLTTPSQTPPGPAVGAACDPTKDDKGYFRRLKYLMERRFPCGVCQKSFKQSSHLVQHMLVHSGERPYECGICGRTYNHVSSLIRHRRCHKDVPPTPTGGTPQPGPALPSLGLPVSTASATASSDPAAVSSGPSATPATPATSTDGNTTPAAPPGVAMPPSATTGGDGPFACSLCWKVFKKPSHLHQHQIIHTGEKPFSCSVCSKSFNRRESLKRHVKTHSADLLRLPCGICGKVFRDASYLLKHQAAHAAAGTPRPVYPCDLCGKTYSAPQSLLRHKAAHAPPVATEPAKDGAASVPQPPPPFPPGPYLLPADPSTTDEKATAAAAAVVYGAVPVPLLSAHPLLLGGAGNGGAGGPGAGGPSKTFCCGICGRAFGRRETLKRHERIHTGEKPHQCPVCGKRFRESFHLSKHHVVHTRERPYKCELCGKVFGYPQSLTRHRQVHRLQLPCALAGATGLATGQGTTGACGPGAAGTSGGPADLSYACSDCGEHFPDLFHVMSHKEAHMSEKPYGCDACGKTFGFIENLMWHKLVHQAAPERLLAPTPSGPQSSDGGSSGGGTDASSVLDNGLAGEVGTAVAALAGVSGGSEDAGGATVAGSGGGTSSGAERFSCATCGQSFKHFLGLVTHKYVHLVRRTLGCGLCGQSFAGAYDLLLHRRSHRQKRGFRCPVCGKRFWEAALLMRHQRCHTEQRPYRCGVCGRGFLRSWYLRQHRVVHTGERAFKCGVCAKHFAQSSSLAEHRRLHAVARPQRCGACGKTFRYRSNLLEHQRLHLGERAYRCEHCGKGFFYLSSVLRHQRAHEPPRPELRCPACLKAFKDPGYFRKHLAAHQGGRPFRCSSCGEGFANTYGLKKHRLMHKAEGLGMPGTGGSALAGKDP.

3 disordered regions span residues 1–24, 58–134, and 156–201; these read MEAN…EDGV, LPCT…PPLF, and GNLK…ACDP. The segment covering 8–21 has biased composition (gly residues); the sequence is SGAGGGGSSGIGGE. Positions 61–78 are enriched in pro residues; that stretch reads TPGPPPQPPPQPPPPQYD. Residues 93 to 113 are compositionally biased toward low complexity; the sequence is SSSSSSSSSSSSSSSSSSSSS. Pro residues predominate over residues 120–133; sequence PPLPPTFGAPPPPL. Positions 172–187 are enriched in low complexity; the sequence is GLGTPTGTPGPLTTPS. 2 consecutive C2H2-type zinc fingers follow at residues 220–242 and 248–270; these read FPCG…MLVH and YECG…RRCH. The segment at 269–342 is disordered; that stretch reads CHKDVPPTPT…PPGVAMPPSA (74 aa). The span at 294 to 324 shows a compositional bias: low complexity; that stretch reads PVSTASATASSDPAAVSSGPSATPATPATST. 9 C2H2-type zinc fingers span residues 350–372, 378–400, 407–429, 439–461, 546–568, 574–596, 602–624, 664–686, and 692–714; these read FACS…QIIH, FSCS…VKTH, LPCG…QAAH, YPCD…KAAH, FCCG…ERIH, HQCP…HVVH, YKCE…RQVH, YACS…KEAH, and YGCD…KLVH. Positions 459-486 are disordered; it reads AAHAPPVATEPAKDGAASVPQPPPPFPP. Residues 721 to 743 form a disordered region; that stretch reads LLAPTPSGPQSSDGGSSGGGTDA. 9 consecutive C2H2-type zinc fingers follow at residues 791–813, 819–841, 847–869, 875–897, 903–925, 931–953, 959–981, 988–1010, and 1016–1038; these read FSCA…KYVH, LGCG…RRSH, FRCP…QRCH, YRCG…RVVH, FKCG…RRLH, QRCG…QRLH, YRCE…QRAH, LRCP…LAAH, and FRCS…RLMH. K801 participates in a covalent cross-link: Glycyl lysine isopeptide (Lys-Gly) (interchain with G-Cter in SUMO2). Residue K1039 forms a Glycyl lysine isopeptide (Lys-Gly) (interchain with G-Cter in SUMO2) linkage.

Belongs to the krueppel C2H2-type zinc-finger protein family.

The protein localises to the nucleus. Its function is as follows. May be involved in transcriptional regulation. The sequence is that of Zinc finger protein 865 (Znf865) from Mus musculus (Mouse).